A 641-amino-acid polypeptide reads, in one-letter code: Chaperone protein DnaK (641 aa).

At T200 the chain carries Phosphothreonine; by autocatalysis. The segment covering 602 to 611 (AASSKASAAS) has biased composition (low complexity). The disordered stretch occupies residues 602–641 (AASSKASAASSPPPPPGAGGQKSDVIDAEFEKVDKDKPQA). Basic and acidic residues predominate over residues 630–641 (EFEKVDKDKPQA).

The protein belongs to the heat shock protein 70 family.

Its function is as follows. Acts as a chaperone. The protein is Chaperone protein DnaK of Methylacidiphilum infernorum (isolate V4) (Methylokorus infernorum (strain V4)).